Reading from the N-terminus, the 510-residue chain is NAD(P)H-quinone oxidoreductase subunit 2 B, chloroplastic (510 aa).

The next 14 helical transmembrane spans lie at 31–51, 59–79, 99–119, 124–144, 149–169, 184–204, 229–249, 261–281, 295–315, 323–343, 354–374, 395–415, 418–438, and 484–504; these read FIFP…IDLT, WFYF…LFRW, IFQF…VEYI, MAIT…MFLC, LITI…LSGY, LLMG…LYGL, ISIA…LAPF, PTPV…ALAT, WHLL…LLAI, MLAY…IVGD, YMLF…LFGL, ALSL…AGFF, LYLF…IGLL, and MTVC…ILAI.

This sequence belongs to the complex I subunit 2 family. As to quaternary structure, NDH is composed of at least 16 different subunits, 5 of which are encoded in the nucleus.

The protein resides in the plastid. It localises to the chloroplast thylakoid membrane. The catalysed reaction is a plastoquinone + NADH + (n+1) H(+)(in) = a plastoquinol + NAD(+) + n H(+)(out). It carries out the reaction a plastoquinone + NADPH + (n+1) H(+)(in) = a plastoquinol + NADP(+) + n H(+)(out). NDH shuttles electrons from NAD(P)H:plastoquinone, via FMN and iron-sulfur (Fe-S) centers, to quinones in the photosynthetic chain and possibly in a chloroplast respiratory chain. The immediate electron acceptor for the enzyme in this species is believed to be plastoquinone. Couples the redox reaction to proton translocation, and thus conserves the redox energy in a proton gradient. This is NAD(P)H-quinone oxidoreductase subunit 2 B, chloroplastic from Hordeum vulgare (Barley).